The chain runs to 219 residues: 3-dehydroquinate dehydratase (219 aa).

3-dehydroquinate is bound by residues 28 to 30 and Arg61; that span reads ELR. His116 acts as the Proton donor/acceptor in catalysis. The active-site Schiff-base intermediate with substrate is Lys142. 3-dehydroquinate-binding residues include Arg180 and Gln203.

It belongs to the type-I 3-dehydroquinase family. As to quaternary structure, homodimer.

It catalyses the reaction 3-dehydroquinate = 3-dehydroshikimate + H2O. It functions in the pathway metabolic intermediate biosynthesis; chorismate biosynthesis; chorismate from D-erythrose 4-phosphate and phosphoenolpyruvate: step 3/7. Functionally, involved in the third step of the chorismate pathway, which leads to the biosynthesis of aromatic amino acids. Catalyzes the cis-dehydration of 3-dehydroquinate (DHQ) and introduces the first double bond of the aromatic ring to yield 3-dehydroshikimate. This is 3-dehydroquinate dehydratase from Aquifex aeolicus (strain VF5).